The sequence spans 257 residues: Glutamate racemase (257 aa).

Substrate is bound by residues 12–13 (DS) and 44–45 (YG). Cys-75 functions as the Proton donor/acceptor in the catalytic mechanism. Position 76 to 77 (76 to 77 (NT)) interacts with substrate. Cys-176 serves as the catalytic Proton donor/acceptor. 177–178 (TH) provides a ligand contact to substrate.

Belongs to the aspartate/glutamate racemases family.

The catalysed reaction is L-glutamate = D-glutamate. The protein operates within cell wall biogenesis; peptidoglycan biosynthesis. Functionally, provides the (R)-glutamate required for cell wall biosynthesis. The sequence is that of Glutamate racemase from Thermus thermophilus (strain ATCC 27634 / DSM 579 / HB8).